A 167-amino-acid polypeptide reads, in one-letter code: Gametocyte-specific factor 1 (167 aa).

S8 carries the phosphoserine modification. 2 CHHC U11-48K-type zinc fingers span residues 14 to 41 (LLQC…RKNH) and 48 to 75 (LATC…DDRS). Residues C17, H23, H33, C37, C51, H57, H67, and C71 each coordinate Zn(2+).

The protein belongs to the UPF0224 (FAM112) family.

The protein localises to the cytoplasm. Required for spermatogenesis and is involved in the suppression of retrotransposon transcription in male germ cells. This Homo sapiens (Human) protein is Gametocyte-specific factor 1 (GTSF1).